The sequence spans 236 residues: Small ribosomal subunit protein uS2c (236 aa).

This sequence belongs to the universal ribosomal protein uS2 family.

The protein resides in the plastid. It localises to the chloroplast. The chain is Small ribosomal subunit protein uS2c (rps2) from Cucumis sativus (Cucumber).